The sequence spans 234 residues: uncharacterized protein (234 aa).

The 230-residue stretch at 5 to 234 (MELVDVWKIY…ERRGVVYGDT (230 aa)) folds into the ABC transporter domain. 41 to 48 (GPSGSGKS) provides a ligand contact to ATP.

The protein belongs to the ABC transporter superfamily.

This is an uncharacterized protein from Thermotoga maritima (strain ATCC 43589 / DSM 3109 / JCM 10099 / NBRC 100826 / MSB8).